The sequence spans 191 residues: CASP-like protein 2U4 (191 aa).

The Cytoplasmic segment spans residues 1–25; that stretch reads MGAYDGAEAPRAAPASTAANSRPSR. The helical transmembrane segment at 26–46 threads the bilayer; it reads LLLLHSLLLRLVAVVLSILVI. Residues 47 to 68 are Extracellular-facing; that stretch reads AVMVHAKQRVMIFKAEWDNSKA. Residues 69–89 traverse the membrane as a helical segment; the sequence is FVALVTISAICLGYSFLQFIL. The Cytoplasmic segment spans residues 90-114; that stretch reads SAFHLCSKSWKSPTKCWAWMNFIAD. Residues 115–135 form a helical membrane-spanning segment; that stretch reads QILTYAMLGAAAAAAELAYIA. Topologically, residues 136–157 are extracellular; that stretch reads KNGSSRAQWQPICSTFNTFCTR. Asn137 is a glycosylation site (N-linked (GlcNAc...) asparagine). A helical transmembrane segment spans residues 158–178; that stretch reads AGASIILSFIAVLALANSSAI. At 179-191 the chain is on the cytoplasmic side; the sequence is SAYHLFRRPSSSV.

Belongs to the Casparian strip membrane proteins (CASP) family. As to quaternary structure, homodimer and heterodimers.

The protein resides in the cell membrane. The protein is CASP-like protein 2U4 of Selaginella moellendorffii (Spikemoss).